The chain runs to 72 residues: MAKEDSIEMEGTVVDTLPNTMFRVELENGHVITAHISGKMRKHYIRILTGDKVTVQLTPYDLSKGRIVYRAR.

The S1-like domain occupies 1-72 (MAKEDSIEME…SKGRIVYRAR (72 aa)).

Belongs to the IF-1 family. As to quaternary structure, component of the 30S ribosomal translation pre-initiation complex which assembles on the 30S ribosome in the order IF-2 and IF-3, IF-1 and N-formylmethionyl-tRNA(fMet); mRNA recruitment can occur at any time during PIC assembly.

Its subcellular location is the cytoplasm. Functionally, one of the essential components for the initiation of protein synthesis. Stabilizes the binding of IF-2 and IF-3 on the 30S subunit to which N-formylmethionyl-tRNA(fMet) subsequently binds. Helps modulate mRNA selection, yielding the 30S pre-initiation complex (PIC). Upon addition of the 50S ribosomal subunit IF-1, IF-2 and IF-3 are released leaving the mature 70S translation initiation complex. The polypeptide is Translation initiation factor IF-1 (Nitrosococcus oceani (strain ATCC 19707 / BCRC 17464 / JCM 30415 / NCIMB 11848 / C-107)).